Here is a 338-residue protein sequence, read N- to C-terminus: Anthranilate phosphoribosyltransferase (338 aa).

5-phospho-alpha-D-ribose 1-diphosphate contacts are provided by residues Gly-81, Gly-84 to Asp-85, Ser-89, Asn-91 to Thr-94, Lys-109 to Ser-117, and Ala-121. Gly-81 contributes to the anthranilate binding site. Ser-93 is a Mg(2+) binding site. Asn-112 is a binding site for anthranilate. Arg-167 contributes to the anthranilate binding site. Mg(2+) contacts are provided by Asp-226 and Glu-227.

The protein belongs to the anthranilate phosphoribosyltransferase family. As to quaternary structure, homodimer. The cofactor is Mg(2+).

The catalysed reaction is N-(5-phospho-beta-D-ribosyl)anthranilate + diphosphate = 5-phospho-alpha-D-ribose 1-diphosphate + anthranilate. The protein operates within amino-acid biosynthesis; L-tryptophan biosynthesis; L-tryptophan from chorismate: step 2/5. Its function is as follows. Catalyzes the transfer of the phosphoribosyl group of 5-phosphorylribose-1-pyrophosphate (PRPP) to anthranilate to yield N-(5'-phosphoribosyl)-anthranilate (PRA). This is Anthranilate phosphoribosyltransferase from Rhodopseudomonas palustris (strain ATCC BAA-98 / CGA009).